A 213-amino-acid polypeptide reads, in one-letter code: MTQLVLASASPARLAVLRAAGVSPLVRVSGVDEDKIADNLGPDAAPEKVVTVLAEAKAAEIVPGLAADNLTDVVVVGCDSMLLIDGQLQGKPGSVDIARKRWAAMAGRSATLLTGHCVLRVADGRIVRMASDHSATVVHFAQPSTEDLEAYLATGEPLQVAGAFTLDSLGGWFVERIEGDPSSVIGIGLPLVRTLLERVGVSVSDLWRTQSIF.

The active-site Proton acceptor is D79.

It belongs to the Maf family. A divalent metal cation serves as cofactor.

Its subcellular location is the cytoplasm. It carries out the reaction a ribonucleoside 5'-triphosphate + H2O = a ribonucleoside 5'-phosphate + diphosphate + H(+). The catalysed reaction is a 2'-deoxyribonucleoside 5'-triphosphate + H2O = a 2'-deoxyribonucleoside 5'-phosphate + diphosphate + H(+). In terms of biological role, nucleoside triphosphate pyrophosphatase. May have a dual role in cell division arrest and in preventing the incorporation of modified nucleotides into cellular nucleic acids. This Rhodococcus erythropolis (strain PR4 / NBRC 100887) protein is Nucleoside triphosphate pyrophosphatase.